We begin with the raw amino-acid sequence, 69 residues long: Mu-conotoxin-like Am3.3 (69 aa).

Residues 1 to 20 (MMSKLGVLLTICLLLFPLTA) form the signal peptide. Positions 21 to 52 (VPLDGDQPADRPAERMQDDISSENHPMFDAIR) are excised as a propeptide. Cysteine 68 carries the cysteine amide modification.

This sequence belongs to the conotoxin M family. Post-translationally, is not hydroxylated. Contains 3 disulfide bonds. As to expression, expressed by the venom duct.

The protein resides in the secreted. Functionally, mu-conotoxins block voltage-gated sodium channels (Nav). The chain is Mu-conotoxin-like Am3.3 from Conus amadis (Amadis cone).